Here is a 171-residue protein sequence, read N- to C-terminus: UPF0312 protein SAR2769 (171 aa).

Belongs to the UPF0312 family.

This chain is UPF0312 protein SAR2769, found in Staphylococcus aureus (strain MRSA252).